The chain runs to 89 residues: Small ribosomal subunit protein uS14A (89 aa).

The protein belongs to the universal ribosomal protein uS14 family. In terms of assembly, part of the 30S ribosomal subunit. Contacts proteins S3 and S10.

In terms of biological role, binds 16S rRNA, required for the assembly of 30S particles and may also be responsible for determining the conformation of the 16S rRNA at the A site. This is Small ribosomal subunit protein uS14A from Listeria monocytogenes serovar 1/2a (strain ATCC BAA-679 / EGD-e).